The following is a 467-amino-acid chain: Retinoic acid receptor RXR-gamma (467 aa).

Residues 1–142 form a modulating region; the sequence is MYGNYPHFIK…TSPGSLAKHI (142 aa). 2 NR C4-type zinc fingers span residues 143 to 163 and 179 to 203; these read CAIC…CEGC and CRDN…YQKC. The segment at residues 143 to 208 is a DNA-binding region (nuclear receptor); it reads CAICGDRSSG…RYQKCLAMGM (66 aa). The segment at 209–232 is hinge; sequence KREAVQEERQGSRERSENEAESTS. Over residues 214–226 the composition is skewed to basic and acidic residues; that stretch reads QEERQGSRERSEN. Residues 214–237 are disordered; the sequence is QEERQGSRERSENEAESTSGGSED. An NR LBD domain is found at 235-463; that stretch reads SEDMPVERIL…TFLMEMLETP (229 aa).

The protein belongs to the nuclear hormone receptor family. NR2 subfamily. In terms of assembly, homodimer. Heterodimer; with a RAR molecule. Binds DNA preferentially as a RAR/RXR heterodimer. Isoform 1 is highly expressed inliver. Isoform 2 is abundantly expressed in eye and dorsal root ganglia.

It localises to the nucleus. Receptor for retinoic acid. Retinoic acid receptors bind as heterodimers to their target response elements in response to their ligands, all-trans or 9-cis retinoic acid, and regulate gene expression in various biological processes. The RAR/RXR heterodimers bind to the retinoic acid response elements (RARE) composed of tandem 5'-AGGTCA-3' sites known as DR1-DR5. The high affinity ligand for RXRs is 9-cis retinoic acid. The polypeptide is Retinoic acid receptor RXR-gamma (RXRG) (Gallus gallus (Chicken)).